Here is a 455-residue protein sequence, read N- to C-terminus: tRNA modification GTPase MnmE (455 aa).

The (6S)-5-formyl-5,6,7,8-tetrahydrofolate site is built by Arg24, Glu81, and Lys121. One can recognise a TrmE-type G domain in the interval 217–378 (GMKVVIAGRP…LKEHLKDIMG (162 aa)). Asn227 provides a ligand contact to K(+). GTP is bound by residues 227 to 232 (NAGKSS), 246 to 252 (TDIAGTT), 271 to 274 (DTAG), and 336 to 339 (NKAD). Ser231 contacts Mg(2+). K(+)-binding residues include Thr246, Ile248, and Thr251. Position 252 (Thr252) interacts with Mg(2+). (6S)-5-formyl-5,6,7,8-tetrahydrofolate is bound at residue Lys455.

This sequence belongs to the TRAFAC class TrmE-Era-EngA-EngB-Septin-like GTPase superfamily. TrmE GTPase family. In terms of assembly, homodimer. Heterotetramer of two MnmE and two MnmG subunits. K(+) is required as a cofactor.

It localises to the cytoplasm. In terms of biological role, exhibits a very high intrinsic GTPase hydrolysis rate. Involved in the addition of a carboxymethylaminomethyl (cmnm) group at the wobble position (U34) of certain tRNAs, forming tRNA-cmnm(5)s(2)U34. The polypeptide is tRNA modification GTPase MnmE (Psychromonas ingrahamii (strain DSM 17664 / CCUG 51855 / 37)).